The chain runs to 506 residues: Maturase K (506 aa).

It belongs to the intron maturase 2 family. MatK subfamily.

The protein resides in the plastid. The protein localises to the chloroplast. Functionally, usually encoded in the trnK tRNA gene intron. Probably assists in splicing its own and other chloroplast group II introns. This chain is Maturase K, found in Sullivantia sullivantii (Sullivant's coolwort).